The primary structure comprises 550 residues: MRFFPWGFWLLCVASAPARGDSGSKARSCAEVRQLYGAKGFSLNGVPQAEISGEHLRICPQGYTCCTSEMEENFANKSRSEFEAMMKEAGRSVQTILTAQYKSFDNYFQDLLNKSEKALYDTFPSLYGDLYTQNMKVFKDLYSELRRYYRGSNINLEEALNEFWTRLLERLFKLMNAQYHITDEYLDCMVKHAEQHKPFGEVPRDLKVKATRAFIVARSYAQGFLVGSDVVKKVSQVSLSHECTRAVMKLMYCPHCRGMASVKPCSNYCLNVVKGCLANQADLNTEWKYLMDALVAVADRIDGPYNVDTVIGTIHMRISEAISNLQENKVSITAKVFQGCGNPKVSMKGSSSEDKKRRGKVTLEAKSSAVALEMLVLDAKGNLTALKSYWVTLPGVLCSKKIMASPAEDDKCWNGMTKGSYLPEVMGGGLANQINNPEVEVDITKPDMTIRQQIMQLKIMTNRLGNANIGNDVDFQDASDDMSGSGSGDSCPDDVCVKRLSKSPSTRQPETHAIPKQSGHGVIGASSRSLPSAFLLFLSGASIVVQHLWR.

Positions 1–20 (MRFFPWGFWLLCVASAPARG) are cleaved as a signal peptide. Cystine bridges form between Cys29–Cys65, Cys59–Cys253, Cys66–Cys256, Cys188–Cys340, Cys243–Cys276, Cys265–Cys412, and Cys269–Cys398. 2 N-linked (GlcNAc...) asparagine glycosylation sites follow: Asn76 and Asn113. Residue Asn382 is glycosylated (N-linked (GlcNAc...) asparagine). Disordered stretches follow at residues 475-494 (FQDASDDMSGSGSGDSCPDD) and 502-522 (KSPSTRQPETHAIPKQSGHGV). The span at 481–494 (DMSGSGSGDSCPDD) shows a compositional bias: low complexity. Residues Ser483, Ser485, and Ser487 are each glycosylated (O-linked (Xyl...) (heparan sulfate) serine). A lipid anchor (GPI-anchor amidated glycine) is attached at Gly524. The propeptide at 525-550 (ASSRSLPSAFLLFLSGASIVVQHLWR) is removed in mature form.

Belongs to the glypican family. In terms of processing, O-glycosylated with heparan sulfate.

The protein resides in the cell membrane. It is found in the endosome. The protein localises to the secreted. Its subcellular location is the extracellular space. In terms of biological role, cell surface proteoglycan that bears heparan sulfate. Modulates Wnt-signaling pathway. This chain is Glypican-1 (GPC1), found in Gallus gallus (Chicken).